Reading from the N-terminus, the 512-residue chain is Maturase K (512 aa).

It belongs to the intron maturase 2 family. MatK subfamily.

It is found in the plastid. The protein resides in the chloroplast. In terms of biological role, usually encoded in the trnK tRNA gene intron. Probably assists in splicing its own and other chloroplast group II introns. This chain is Maturase K, found in Lilium canadense (Canada lily).